Reading from the N-terminus, the 124-residue chain is Small ribosomal subunit protein uS11 (124 aa).

Belongs to the universal ribosomal protein uS11 family. In terms of assembly, part of the 30S ribosomal subunit. Interacts with proteins S7 and S18. Binds to IF-3.

In terms of biological role, located on the platform of the 30S subunit, it bridges several disparate RNA helices of the 16S rRNA. Forms part of the Shine-Dalgarno cleft in the 70S ribosome. In Anaplasma marginale (strain St. Maries), this protein is Small ribosomal subunit protein uS11.